Reading from the N-terminus, the 425-residue chain is MLNIKWIRENKELFDEKLSQRFIEPMSSKIAMLDREKRKITSLIQEFQHARKVKSKILGNMASKSGEEFEGLQRDVKHINEKLEALEHDLNNNNELNELLNMFPNIPDEEVPYGMDESMNKLVRTYGETNPNALNKQHFELGIKLNLMDFEQTAKISGTRFVTLKGDLAKLERALINFMIDVHTKEWDFFEISPPVLVRDNAMYNAGQLPKFAEESFATTNGYRLIPTAEVSLVNMVADTIIPREKLPIRYVAYTPCFRSEAGSSGRDTRGMIRLHQFGKVELVSITTPEESTNEHEYITNASETILQKLNLPYRVMLLCTGDMGFAAKKTYDIEVWLPGQKQYREIASCSNCGDFQARRMKARYKEFGSNETTLVHTLNASGLPIGRTMVAILENYQNEDGSITIPDVLINYMGGLQKIIAYSE.

228 to 230 is an L-serine binding site; sequence TAE. ATP is bound at residue 259–261; the sequence is RSE. Glu-282 is an L-serine binding site. An ATP-binding site is contributed by 346 to 349; sequence EIAS. Ser-382 serves as a coordination point for L-serine.

Belongs to the class-II aminoacyl-tRNA synthetase family. Type-1 seryl-tRNA synthetase subfamily. As to quaternary structure, homodimer. The tRNA molecule binds across the dimer.

Its subcellular location is the cytoplasm. The enzyme catalyses tRNA(Ser) + L-serine + ATP = L-seryl-tRNA(Ser) + AMP + diphosphate + H(+). It carries out the reaction tRNA(Sec) + L-serine + ATP = L-seryl-tRNA(Sec) + AMP + diphosphate + H(+). The protein operates within aminoacyl-tRNA biosynthesis; selenocysteinyl-tRNA(Sec) biosynthesis; L-seryl-tRNA(Sec) from L-serine and tRNA(Sec): step 1/1. Catalyzes the attachment of serine to tRNA(Ser). Is also able to aminoacylate tRNA(Sec) with serine, to form the misacylated tRNA L-seryl-tRNA(Sec), which will be further converted into selenocysteinyl-tRNA(Sec). The protein is Serine--tRNA ligase of Rickettsia peacockii (strain Rustic).